The primary structure comprises 508 residues: Maturase K (508 aa).

This sequence belongs to the intron maturase 2 family. MatK subfamily.

The protein localises to the plastid. It localises to the chloroplast. In terms of biological role, usually encoded in the trnK tRNA gene intron. Probably assists in splicing its own and other chloroplast group II introns. In Chaetosphaeridium globosum (Charophycean green alga), this protein is Maturase K.